The sequence spans 141 residues: ATP synthase epsilon chain (141 aa).

This sequence belongs to the ATPase epsilon chain family. As to quaternary structure, F-type ATPases have 2 components, CF(1) - the catalytic core - and CF(0) - the membrane proton channel. CF(1) has five subunits: alpha(3), beta(3), gamma(1), delta(1), epsilon(1). CF(0) has three main subunits: a, b and c.

It localises to the cell inner membrane. Functionally, produces ATP from ADP in the presence of a proton gradient across the membrane. In Teredinibacter turnerae (strain ATCC 39867 / T7901), this protein is ATP synthase epsilon chain.